The primary structure comprises 235 residues: Endonuclease V (235 aa).

Positions 45 and 115 each coordinate Mg(2+).

This sequence belongs to the endonuclease V family. It depends on Mg(2+) as a cofactor.

The protein localises to the cytoplasm. The enzyme catalyses Endonucleolytic cleavage at apurinic or apyrimidinic sites to products with a 5'-phosphate.. In terms of biological role, DNA repair enzyme involved in the repair of deaminated bases. Selectively cleaves double-stranded DNA at the second phosphodiester bond 3' to a deoxyinosine leaving behind the intact lesion on the nicked DNA. In Bacillus thuringiensis subsp. konkukian (strain 97-27), this protein is Endonuclease V.